The following is a 182-amino-acid chain: ATP synthase subunit delta, organellar chromatophore (182 aa).

It belongs to the ATPase delta chain family. F-type ATPases have 2 components, F(1) - the catalytic core - and F(0) - the membrane proton channel. F(1) has five subunits: alpha(3), beta(3), gamma(1), delta(1), epsilon(1). CF(0) has four main subunits: a(1), b(1), b'(1) and c(10-14). The alpha and beta chains form an alternating ring which encloses part of the gamma chain. F(1) is attached to F(0) by a central stalk formed by the gamma and epsilon chains, while a peripheral stalk is formed by the delta, b and b' chains.

It localises to the plastid. Its subcellular location is the organellar chromatophore thylakoid membrane. In terms of biological role, f(1)F(0) ATP synthase produces ATP from ADP in the presence of a proton or sodium gradient. F-type ATPases consist of two structural domains, F(1) containing the extramembraneous catalytic core and F(0) containing the membrane proton channel, linked together by a central stalk and a peripheral stalk. During catalysis, ATP synthesis in the catalytic domain of F(1) is coupled via a rotary mechanism of the central stalk subunits to proton translocation. This protein is part of the stalk that links CF(0) to CF(1). It either transmits conformational changes from CF(0) to CF(1) or is implicated in proton conduction. This chain is ATP synthase subunit delta, organellar chromatophore, found in Paulinella chromatophora.